We begin with the raw amino-acid sequence, 156 residues long: Ribosomal RNA large subunit methyltransferase H (156 aa).

Residues leucine 73, glycine 104, and 123–128 (LSALTL) contribute to the S-adenosyl-L-methionine site.

Belongs to the RNA methyltransferase RlmH family. In terms of assembly, homodimer.

Its subcellular location is the cytoplasm. It catalyses the reaction pseudouridine(1915) in 23S rRNA + S-adenosyl-L-methionine = N(3)-methylpseudouridine(1915) in 23S rRNA + S-adenosyl-L-homocysteine + H(+). Functionally, specifically methylates the pseudouridine at position 1915 (m3Psi1915) in 23S rRNA. The protein is Ribosomal RNA large subunit methyltransferase H of Shewanella woodyi (strain ATCC 51908 / MS32).